The primary structure comprises 253 residues: 5-oxoprolinase subunit A (253 aa).

Belongs to the LamB/PxpA family. Forms a complex composed of PxpA, PxpB and PxpC.

The enzyme catalyses 5-oxo-L-proline + ATP + 2 H2O = L-glutamate + ADP + phosphate + H(+). Functionally, catalyzes the cleavage of 5-oxoproline to form L-glutamate coupled to the hydrolysis of ATP to ADP and inorganic phosphate. In Bacillus anthracis (strain A0248), this protein is 5-oxoprolinase subunit A.